Consider the following 393-residue polypeptide: ATP phosphoribosyltransferase regulatory subunit (393 aa).

This sequence belongs to the class-II aminoacyl-tRNA synthetase family. HisZ subfamily. In terms of assembly, heteromultimer composed of HisG and HisZ subunits.

It is found in the cytoplasm. It participates in amino-acid biosynthesis; L-histidine biosynthesis; L-histidine from 5-phospho-alpha-D-ribose 1-diphosphate: step 1/9. Required for the first step of histidine biosynthesis. May allow the feedback regulation of ATP phosphoribosyltransferase activity by histidine. The sequence is that of ATP phosphoribosyltransferase regulatory subunit from Nitrosospira multiformis (strain ATCC 25196 / NCIMB 11849 / C 71).